A 299-amino-acid chain; its full sequence is Coenzyme PQQ synthesis protein B (299 aa).

This sequence belongs to the PqqB family.

The protein operates within cofactor biosynthesis; pyrroloquinoline quinone biosynthesis. May be involved in the transport of PQQ or its precursor to the periplasm. The polypeptide is Coenzyme PQQ synthesis protein B (Methylorubrum populi (strain ATCC BAA-705 / NCIMB 13946 / BJ001) (Methylobacterium populi)).